Reading from the N-terminus, the 37-residue chain is Large ribosomal subunit protein bL36c (37 aa).

It belongs to the bacterial ribosomal protein bL36 family.

Its subcellular location is the plastid. It is found in the chloroplast. The chain is Large ribosomal subunit protein bL36c from Tupiella akineta (Green alga).